A 156-amino-acid chain; its full sequence is uncharacterized protein (156 aa).

Residues 10-156 (VAARTFPLAC…NDYVMVRELV (147 aa)) enclose the N-acetyltransferase domain.

This sequence belongs to the acetyltransferase family.

This is an uncharacterized protein from Mycobacterium bovis (strain ATCC BAA-935 / AF2122/97).